Reading from the N-terminus, the 328-residue chain is uncharacterized protein (328 aa).

Residues 1–22 (MPVKPNQPRPSTKQDPSSGASR) are disordered. Residues 9-21 (RPSTKQDPSSGAS) show a composition bias toward polar residues. The next 6 helical transmembrane spans lie at 66–86 (FSFL…GFVL), 126–146 (TVGL…IGNL), 176–196 (FLSL…TSVA), 221–241 (LIAL…ILWV), 255–275 (GTLM…VALP), and 290–310 (IGLM…AAWI).

This sequence to E.coli YhjD.

It is found in the cell inner membrane. This is an uncharacterized protein from Dickeya dadantii (strain 3937) (Erwinia chrysanthemi (strain 3937)).